We begin with the raw amino-acid sequence, 387 residues long: Succinate--CoA ligase [ADP-forming] subunit beta (387 aa).

Residues 9 to 244 form the ATP-grasp domain; sequence KHILSKFGVN…YDEEIKEEIE (236 aa). ATP is bound by residues Lys46, 53-55, Glu99, Cys102, and Glu107; that span reads GRG. Asn199 and Asp213 together coordinate Mg(2+). Substrate-binding positions include Asn264 and 321–323; that span reads GIM.

It belongs to the succinate/malate CoA ligase beta subunit family. Heterotetramer of two alpha and two beta subunits. Mg(2+) serves as cofactor.

It catalyses the reaction succinate + ATP + CoA = succinyl-CoA + ADP + phosphate. The catalysed reaction is GTP + succinate + CoA = succinyl-CoA + GDP + phosphate. Its pathway is carbohydrate metabolism; tricarboxylic acid cycle; succinate from succinyl-CoA (ligase route): step 1/1. In terms of biological role, succinyl-CoA synthetase functions in the citric acid cycle (TCA), coupling the hydrolysis of succinyl-CoA to the synthesis of either ATP or GTP and thus represents the only step of substrate-level phosphorylation in the TCA. The beta subunit provides nucleotide specificity of the enzyme and binds the substrate succinate, while the binding sites for coenzyme A and phosphate are found in the alpha subunit. The chain is Succinate--CoA ligase [ADP-forming] subunit beta from Ehrlichia chaffeensis (strain ATCC CRL-10679 / Arkansas).